The sequence spans 331 residues: Ketol-acid reductoisomerase (NADP(+)) (331 aa).

Residues 2-182 form the KARI N-terminal Rossmann domain; sequence ARMYYDQDAN…GGTRAGILET (181 aa). NADP(+) is bound by residues 25 to 28, S51, S53, and 83 to 86; these read YGSQ and DEVQ. The active site involves H108. G134 contributes to the NADP(+) binding site. The KARI C-terminal knotted domain maps to 183–328; sequence TFREETETDL…KDLRAMFSWL (146 aa). The Mg(2+) site is built by D191, E195, E227, and E231. S252 is a binding site for substrate.

Belongs to the ketol-acid reductoisomerase family. As to quaternary structure, homooctamer. Mg(2+) is required as a cofactor.

It carries out the reaction (2R)-2,3-dihydroxy-3-methylbutanoate + NADP(+) = (2S)-2-acetolactate + NADPH + H(+). The enzyme catalyses (2R,3R)-2,3-dihydroxy-3-methylpentanoate + NADP(+) = (S)-2-ethyl-2-hydroxy-3-oxobutanoate + NADPH + H(+). Its pathway is amino-acid biosynthesis; L-isoleucine biosynthesis; L-isoleucine from 2-oxobutanoate: step 2/4. It functions in the pathway amino-acid biosynthesis; L-valine biosynthesis; L-valine from pyruvate: step 2/4. Its function is as follows. Involved in the biosynthesis of branched-chain amino acids (BCAA). Catalyzes an alkyl-migration followed by a ketol-acid reduction of (S)-2-acetolactate (S2AL) to yield (R)-2,3-dihydroxy-isovalerate. In the isomerase reaction, S2AL is rearranged via a Mg-dependent methyl migration to produce 3-hydroxy-3-methyl-2-ketobutyrate (HMKB). In the reductase reaction, this 2-ketoacid undergoes a metal-dependent reduction by NADPH to yield (R)-2,3-dihydroxy-isovalerate. In Synechocystis sp. (strain ATCC 27184 / PCC 6803 / Kazusa), this protein is Ketol-acid reductoisomerase (NADP(+)).